The sequence spans 224 residues: Probable GTP-binding protein EngB (224 aa).

In terms of domain architecture, EngB-type G spans 31–204; the sequence is VGVEIAFAGR…LGILDQWCKP (174 aa). GTP contacts are provided by residues 39-46, 65-69, 83-86, 150-153, and 183-185; these read GRSNAGKS, GRTQL, DLPG, TKAD, and FSS. S46 and T67 together coordinate Mg(2+).

It belongs to the TRAFAC class TrmE-Era-EngA-EngB-Septin-like GTPase superfamily. EngB GTPase family. Mg(2+) serves as cofactor.

In terms of biological role, necessary for normal cell division and for the maintenance of normal septation. This is Probable GTP-binding protein EngB from Shewanella piezotolerans (strain WP3 / JCM 13877).